Reading from the N-terminus, the 232-residue chain is LexA repressor (232 aa).

The H-T-H motif DNA-binding region spans F26 to T46. Residues S153 and K191 each act as for autocatalytic cleavage activity in the active site.

This sequence belongs to the peptidase S24 family. Homodimer.

The enzyme catalyses Hydrolysis of Ala-|-Gly bond in repressor LexA.. In terms of biological role, represses a number of genes involved in the response to DNA damage (SOS response), including recA and lexA. In the presence of single-stranded DNA, RecA interacts with LexA causing an autocatalytic cleavage which disrupts the DNA-binding part of LexA, leading to derepression of the SOS regulon and eventually DNA repair. This Bradyrhizobium sp. (strain ORS 278) protein is LexA repressor.